Here is a 127-residue protein sequence, read N- to C-terminus: uncharacterized protein (127 aa).

The HTH asnC-type domain occupies 1–46 (MEVGLSPSACLRRIKLMEQAGVIRGYTALVDPTQSESTIAVIINIT).

Its function is as follows. Not known, symbiotically active. This is an uncharacterized protein from Sinorhizobium fredii (strain NBRC 101917 / NGR234).